The chain runs to 396 residues: Tryptophan synthase beta chain (396 aa).

Lys86 is subject to N6-(pyridoxal phosphate)lysine.

This sequence belongs to the TrpB family. In terms of assembly, tetramer of two alpha and two beta chains. Requires pyridoxal 5'-phosphate as cofactor.

The catalysed reaction is (1S,2R)-1-C-(indol-3-yl)glycerol 3-phosphate + L-serine = D-glyceraldehyde 3-phosphate + L-tryptophan + H2O. It functions in the pathway amino-acid biosynthesis; L-tryptophan biosynthesis; L-tryptophan from chorismate: step 5/5. Its function is as follows. The beta subunit is responsible for the synthesis of L-tryptophan from indole and L-serine. The sequence is that of Tryptophan synthase beta chain from Aliivibrio salmonicida (strain LFI1238) (Vibrio salmonicida (strain LFI1238)).